The following is a 201-amino-acid chain: Holliday junction resolvase RecU (201 aa).

Mg(2+)-binding residues include threonine 85, aspartate 87, glutamate 100, and glutamine 119.

This sequence belongs to the RecU family. Mg(2+) serves as cofactor.

The protein localises to the cytoplasm. It carries out the reaction Endonucleolytic cleavage at a junction such as a reciprocal single-stranded crossover between two homologous DNA duplexes (Holliday junction).. In terms of biological role, endonuclease that resolves Holliday junction intermediates in genetic recombination. Cleaves mobile four-strand junctions by introducing symmetrical nicks in paired strands. Promotes annealing of linear ssDNA with homologous dsDNA. Required for DNA repair, homologous recombination and chromosome segregation. The sequence is that of Holliday junction resolvase RecU from Geobacillus sp. (strain WCH70).